Reading from the N-terminus, the 807-residue chain is Glycerol-3-phosphate acyltransferase (807 aa).

The short motif at 308 to 313 (CHRSHM) is the HXXXXD motif element.

This sequence belongs to the GPAT/DAPAT family.

The protein resides in the cell inner membrane. It catalyses the reaction sn-glycerol 3-phosphate + an acyl-CoA = a 1-acyl-sn-glycero-3-phosphate + CoA. It functions in the pathway phospholipid metabolism; CDP-diacylglycerol biosynthesis; CDP-diacylglycerol from sn-glycerol 3-phosphate: step 1/3. This Shewanella sp. (strain W3-18-1) protein is Glycerol-3-phosphate acyltransferase.